Reading from the N-terminus, the 302-residue chain is HTH-type transcriptional regulator AbgR (302 aa).

Residues 5-62 enclose the HTH lysR-type domain; the sequence is VKIHQIRAFVEVARQGSIRGASRMLNMSQPALSKSIQELEEGLAAQLFFRRSKGVTLT. Positions 22–41 form a DNA-binding region, H-T-H motif; that stretch reads IRGASRMLNMSQPALSKSIQ.

This sequence belongs to the LysR transcriptional regulatory family.

Its function is as follows. Could be the regulator of the abg operon. This is HTH-type transcriptional regulator AbgR (abgR) from Escherichia coli (strain K12).